A 209-amino-acid polypeptide reads, in one-letter code: Ribosomal RNA small subunit methyltransferase G (209 aa).

S-adenosyl-L-methionine is bound by residues Gly71, Phe76, 122 to 123, and Arg135; that span reads AE.

This sequence belongs to the methyltransferase superfamily. RNA methyltransferase RsmG family.

It is found in the cytoplasm. Its function is as follows. Specifically methylates the N7 position of a guanine in 16S rRNA. This Phocaeicola vulgatus (strain ATCC 8482 / DSM 1447 / JCM 5826 / CCUG 4940 / NBRC 14291 / NCTC 11154) (Bacteroides vulgatus) protein is Ribosomal RNA small subunit methyltransferase G.